We begin with the raw amino-acid sequence, 95 residues long: Large ribosomal subunit protein bL27 (95 aa).

Residues 1–21 form a disordered region; sequence MAHKKGASSSRNGRDSNAQRL. Residues 7–19 are compositionally biased toward polar residues; it reads ASSSRNGRDSNAQ.

It belongs to the bacterial ribosomal protein bL27 family.

The protein is Large ribosomal subunit protein bL27 of Parafrankia sp. (strain EAN1pec).